A 418-amino-acid polypeptide reads, in one-letter code: Deubiquitinase and deneddylase Dub1 (418 aa).

Residues 1-10 (MLSPTNSTSK) are compositionally biased toward polar residues. Residues 1-23 (MLSPTNSTSKKAPVPPQDSSKPV) form a disordered region. The chain crosses the membrane as a helical span at residues 40 to 60 (TALAVLLVVVTLGLILLFYSF). A disordered region spans residues 72-143 (TRPSTKEQPT…PPLPPKAPKP (72 aa)). Pro residues predominate over residues 86–141 (VPLPSPPLAVPRPSTPPPPVISRPSTPPAPTPAISPPSTPSAPKPSTPPPLPPKAP). Active-site residues include H288, D305, and C358.

Belongs to the peptidase C48 family.

The protein localises to the secreted. The protein resides in the host cell. It localises to the membrane. Functionally, effector proteins function to alter host cell physiology and promote bacterial survival in host tissues. This protease possesses deubiquitinating and deneddylating activities. This Chlamydia trachomatis serovar D (strain ATCC VR-885 / DSM 19411 / UW-3/Cx) protein is Deubiquitinase and deneddylase Dub1 (cdu1).